Here is a 362-residue protein sequence, read N- to C-terminus: Putative transport protein BB_0006 (362 aa).

The next 8 helical transmembrane spans lie at 20–40, 43–63, 68–88, 144–164, 212–232, 234–254, 265–285, and 304–326; these read FYCIVIVLIFIGAFKIAEAVF, LAISIVLGFLVYPVYTFLARF, FLIVFIIFFLLFSFSYLIFSF, EIIGFTSSLVVVFLLLYFLLS, ILVFIGLTLFGQDFPLVWAVL, FVFNFIPSIGSILAVFFIVIT, IVLYVFIYNTSIQMLIGNILE, and LFFWGWLWGIVGLLISYPFTVIV.

It belongs to the autoinducer-2 exporter (AI-2E) (TC 2.A.86) family.

It is found in the cell membrane. In Borreliella burgdorferi (strain ATCC 35210 / DSM 4680 / CIP 102532 / B31) (Borrelia burgdorferi), this protein is Putative transport protein BB_0006.